The following is a 370-amino-acid chain: MPSAKPLFCLATLAGAALAAPAPSRATDFNKRSTCTFTDAATASESKTSCSDIVLKDITVPAGETLNLKDLNDGTTVTFEGTTTWEYEEWDGPLLRISGKDITVTQSSDAVLNGNGAKWWDGEGTNGGKTKPKFFYAHDLDDSKISGLYIKNTPVQAISVESDNLVIEDVTIDNSDGDSEGGHNTDGFDISESTYITITGATVKNQGDCVAINSGENIYFSGGTCSGGHGLSIGSVGGRDDNTVKNVTFIDSTVSDSENGVRIKTVYDATGTVEDITYSNIQLSGISDYGIVIEQDYENGDPTGTPSNGVTISDVTLEDITGSVDSDAVEIYILCGDGSCTDWTMSGIDITGGETSSDCENVPSGASCSQ.

Residues 1 to 19 (MPSAKPLFCLATLAGAALA) form the signal peptide. Positions 20 to 32 (APAPSRATDFNKR) are excised as a propeptide. A disulfide bridge links cysteine 35 with cysteine 50. 6 PbH1 repeats span residues 162-192 (SDNL…DISE), 193-214 (STYI…AINS), 215-235 (GENI…SIGS), 244-265 (VKNV…RIKT), 273-295 (VEDI…VIEQ), and 307-352 (SNGV…DITG). A disulfide bridge links cysteine 209 with cysteine 225. Histidine 229 is an active-site residue. Asparagine 246 carries N-linked (GlcNAc...) asparagine glycosylation. Disulfide bonds link cysteine 335–cysteine 340 and cysteine 359–cysteine 368.

It belongs to the glycosyl hydrolase 28 family.

It localises to the secreted. It carries out the reaction (1,4-alpha-D-galacturonosyl)n+m + H2O = (1,4-alpha-D-galacturonosyl)n + (1,4-alpha-D-galacturonosyl)m.. Involved in maceration and soft-rotting of plant tissue. Hydrolyzes the 1,4-alpha glycosidic bonds of de-esterified pectate in the smooth region of the plant cell wall. The protein is Endopolygalacturonase A (pgaA) of Aspergillus awamori (Black koji mold).